Here is a 273-residue protein sequence, read N- to C-terminus: MLTRRIIPCLDVTLGPNGGCVVKGVEFVNLRSAGDPVELAKRYNDQGADELVFLDITASHEGRATMIDVIERTASEVFIPMTVGGGIKTIEEIRALLRAGADKITINTTAVKDPEFIRKASDIFGSQCIVTAIDCRSNTNIDDPNARNIVRRRDGTPAWYEVVIYGGRKATGIDAIEWAKTIEELGSGEIMLTSMDADGTKDGYDLYITKAIGEAVRIPVIASGGAGTIEHMYDAFKIANADAALAASIFHFGEYTIGQAKDYLRQRGIPVRP.

Active-site residues include Asp11 and Asp134.

This sequence belongs to the HisA/HisF family. As to quaternary structure, heterodimer of HisH and HisF.

It is found in the cytoplasm. It carries out the reaction 5-[(5-phospho-1-deoxy-D-ribulos-1-ylimino)methylamino]-1-(5-phospho-beta-D-ribosyl)imidazole-4-carboxamide + L-glutamine = D-erythro-1-(imidazol-4-yl)glycerol 3-phosphate + 5-amino-1-(5-phospho-beta-D-ribosyl)imidazole-4-carboxamide + L-glutamate + H(+). Its pathway is amino-acid biosynthesis; L-histidine biosynthesis; L-histidine from 5-phospho-alpha-D-ribose 1-diphosphate: step 5/9. Its function is as follows. IGPS catalyzes the conversion of PRFAR and glutamine to IGP, AICAR and glutamate. The HisF subunit catalyzes the cyclization activity that produces IGP and AICAR from PRFAR using the ammonia provided by the HisH subunit. The protein is Imidazole glycerol phosphate synthase subunit HisF of Methanocella arvoryzae (strain DSM 22066 / NBRC 105507 / MRE50).